Here is a 230-residue protein sequence, read N- to C-terminus: UPF0173 metal-dependent hydrolase Dshi_2788 (230 aa).

It belongs to the UPF0173 family.

This chain is UPF0173 metal-dependent hydrolase Dshi_2788, found in Dinoroseobacter shibae (strain DSM 16493 / NCIMB 14021 / DFL 12).